Here is a 157-residue protein sequence, read N- to C-terminus: Arginine repressor (157 aa).

The protein belongs to the ArgR family.

It is found in the cytoplasm. Its pathway is amino-acid biosynthesis; L-arginine biosynthesis [regulation]. Functionally, regulates arginine biosynthesis genes. This Deinococcus deserti (strain DSM 17065 / CIP 109153 / LMG 22923 / VCD115) protein is Arginine repressor.